Consider the following 184-residue polypeptide: Ribosome-recycling factor (184 aa).

Belongs to the RRF family.

It is found in the cytoplasm. In terms of biological role, responsible for the release of ribosomes from messenger RNA at the termination of protein biosynthesis. May increase the efficiency of translation by recycling ribosomes from one round of translation to another. This chain is Ribosome-recycling factor, found in Acholeplasma laidlawii (strain PG-8A).